A 147-amino-acid polypeptide reads, in one-letter code: SsrA-binding protein (147 aa).

The interval 119–147 (AKGKKQHDKRESEKQKEWERDKQRLMRPK) is disordered. Residues 126–147 (DKRESEKQKEWERDKQRLMRPK) show a composition bias toward basic and acidic residues.

It belongs to the SmpB family.

It is found in the cytoplasm. Functionally, required for rescue of stalled ribosomes mediated by trans-translation. Binds to transfer-messenger RNA (tmRNA), required for stable association of tmRNA with ribosomes. tmRNA and SmpB together mimic tRNA shape, replacing the anticodon stem-loop with SmpB. tmRNA is encoded by the ssrA gene; the 2 termini fold to resemble tRNA(Ala) and it encodes a 'tag peptide', a short internal open reading frame. During trans-translation Ala-aminoacylated tmRNA acts like a tRNA, entering the A-site of stalled ribosomes, displacing the stalled mRNA. The ribosome then switches to translate the ORF on the tmRNA; the nascent peptide is terminated with the 'tag peptide' encoded by the tmRNA and targeted for degradation. The ribosome is freed to recommence translation, which seems to be the essential function of trans-translation. The chain is SsrA-binding protein from Nitrosospira multiformis (strain ATCC 25196 / NCIMB 11849 / C 71).